The chain runs to 450 residues: Glucose-6-phosphate isomerase (450 aa).

Position 39 is a phosphothreonine (Thr39). Glu291 (proton donor) is an active-site residue. Residues His312 and Lys426 contribute to the active site.

This sequence belongs to the GPI family.

Its subcellular location is the cytoplasm. It catalyses the reaction alpha-D-glucose 6-phosphate = beta-D-fructose 6-phosphate. It participates in carbohydrate biosynthesis; gluconeogenesis. Its pathway is carbohydrate degradation; glycolysis; D-glyceraldehyde 3-phosphate and glycerone phosphate from D-glucose: step 2/4. In terms of biological role, catalyzes the reversible isomerization of glucose-6-phosphate to fructose-6-phosphate. The polypeptide is Glucose-6-phosphate isomerase (Bacillus mycoides (strain KBAB4) (Bacillus weihenstephanensis)).